A 473-amino-acid polypeptide reads, in one-letter code: GTPase Der (473 aa).

EngA-type G domains lie at 3–167 (LTIA…GKDK) and 204–379 (IRIA…RIWN). Residues 9 to 16 (GRPNVGKS), 56 to 60 (DTAGL), 119 to 122 (NKSE), 210 to 217 (GRPNTGKS), 257 to 261 (DTAGL), and 322 to 325 (NKWD) each bind GTP. A KH-like domain is found at 380–464 (RRISTGKLNR…PIRLSLRTSD (85 aa)).

The protein belongs to the TRAFAC class TrmE-Era-EngA-EngB-Septin-like GTPase superfamily. EngA (Der) GTPase family. Associates with the 50S ribosomal subunit.

Its function is as follows. GTPase that plays an essential role in the late steps of ribosome biogenesis. In Bartonella bacilliformis (strain ATCC 35685 / KC583 / Herrer 020/F12,63), this protein is GTPase Der.